Reading from the N-terminus, the 520-residue chain is Trichothecene O-acetyltransferase TRI3 (520 aa).

A disordered region spans residues 1–23 (MGSKLPELPKLSPEKHRWEKSNV). Residues 12–23 (SPEKHRWEKSNV) show a composition bias toward basic and acidic residues.

This sequence belongs to the trichothecene O-acetyltransferase family.

It participates in sesquiterpene biosynthesis; trichothecene biosynthesis. Functionally, trichothecene O-acetyltransferase; part of the gene cluster that mediates the production of the antimicrobial trichothecene harzianum A (HA) that plays a role in Botrytis cinerea antagonistic activity and plant defense priming. The biosynthesis of harzianum A begins with the cyclization of farnesyl diphosphate to trichodiene and is catalyzed by the trichodiene synthase TRI5. Trichodiene undergoes a series of oxygenations catalyzed by the cytochrome P450 monooxygenase TRI4. TRI4 controls the addition of 3 oxygens at C-2, C-11, and the C-12, C-13-epoxide to form the intermediate isotrichodiol. Isotrichodiol then undergoes a non-enzymatic isomerization and cyclization to form 12,13-epoxytrichothec-9-ene (EPT) which is further converted to trichodermol by the cytochrome P450 monooxygenase TRI11 via C-4 hydroxylation. The last step of HA synthesis is esterification of an octatriendioyl moiety to the C-4 oxygen of trichodermol. The octatriendioyl moiety is probably produced by the polyketide synthase TRI17 and the esterification performed by the trichothecene O-acetyltransferase TRI3. This Trichoderma arundinaceum protein is Trichothecene O-acetyltransferase TRI3.